The chain runs to 78 residues: Large ribosomal subunit protein bL28 (78 aa).

The protein belongs to the bacterial ribosomal protein bL28 family.

This Prochlorococcus marinus (strain MIT 9211) protein is Large ribosomal subunit protein bL28.